A 123-amino-acid chain; its full sequence is Ribosome-binding factor A (123 aa).

The protein belongs to the RbfA family. Monomer. Binds 30S ribosomal subunits, but not 50S ribosomal subunits or 70S ribosomes.

It localises to the cytoplasm. Its function is as follows. One of several proteins that assist in the late maturation steps of the functional core of the 30S ribosomal subunit. Associates with free 30S ribosomal subunits (but not with 30S subunits that are part of 70S ribosomes or polysomes). Required for efficient processing of 16S rRNA. May interact with the 5'-terminal helix region of 16S rRNA. This Trichlorobacter lovleyi (strain ATCC BAA-1151 / DSM 17278 / SZ) (Geobacter lovleyi) protein is Ribosome-binding factor A.